Here is a 365-residue protein sequence, read N- to C-terminus: Aminomethyltransferase (365 aa).

Belongs to the GcvT family. In terms of assembly, the glycine cleavage system is composed of four proteins: P, T, L and H.

It carries out the reaction N(6)-[(R)-S(8)-aminomethyldihydrolipoyl]-L-lysyl-[protein] + (6S)-5,6,7,8-tetrahydrofolate = N(6)-[(R)-dihydrolipoyl]-L-lysyl-[protein] + (6R)-5,10-methylene-5,6,7,8-tetrahydrofolate + NH4(+). Its function is as follows. The glycine cleavage system catalyzes the degradation of glycine. The polypeptide is Aminomethyltransferase (Yersinia enterocolitica serotype O:8 / biotype 1B (strain NCTC 13174 / 8081)).